The sequence spans 158 residues: Protein Smg homolog (158 aa).

It belongs to the Smg family.

The polypeptide is Protein Smg homolog (Coxiella burnetii (strain RSA 331 / Henzerling II)).